The primary structure comprises 271 residues: 3-methyl-2-oxobutanoate hydroxymethyltransferase (271 aa).

Aspartate 51 and aspartate 90 together coordinate Mg(2+). 3-methyl-2-oxobutanoate contacts are provided by residues 51–52 (DS), aspartate 90, and lysine 118. Residue glutamate 120 participates in Mg(2+) binding. The active-site Proton acceptor is glutamate 186.

This sequence belongs to the PanB family. As to quaternary structure, homodecamer; pentamer of dimers. Mg(2+) is required as a cofactor.

It localises to the cytoplasm. The catalysed reaction is 3-methyl-2-oxobutanoate + (6R)-5,10-methylene-5,6,7,8-tetrahydrofolate + H2O = 2-dehydropantoate + (6S)-5,6,7,8-tetrahydrofolate. It functions in the pathway cofactor biosynthesis; (R)-pantothenate biosynthesis; (R)-pantoate from 3-methyl-2-oxobutanoate: step 1/2. Catalyzes the reversible reaction in which hydroxymethyl group from 5,10-methylenetetrahydrofolate is transferred onto alpha-ketoisovalerate to form ketopantoate. In Xanthomonas oryzae pv. oryzae (strain MAFF 311018), this protein is 3-methyl-2-oxobutanoate hydroxymethyltransferase.